The primary structure comprises 520 residues: 4-hydroxyphenylacetate 3-monooxygenase oxygenase component (520 aa).

FAD contacts are provided by residues 155–157 (HAI) and T196.

The protein belongs to the FADH(2)-utilizing monooxygenase family. Homodimer. HPA 3-hydroxylase consists of a reductase component HpaC and an oxygenase component HpaB. Some form of interactions between the reductase and the oxygenase facilitate the transfer of FADH(-) to the oxygenase in P.aeruginosa, although interactions are not required in other species.

It carries out the reaction 4-hydroxyphenylacetate + FADH2 + O2 = 3,4-dihydroxyphenylacetate + FAD + H2O + H(+). Its pathway is aromatic compound metabolism; 4-hydroxyphenylacetate degradation; pyruvate and succinate semialdehyde from 4-hydroxyphenylacetate: step 1/7. Functionally, oxygenase component of the 4-hydroxyphenylacetate (HPA) 3-hydroxylase. Catalyzes the hydroxylation of 4-hydroxyphenylacetate to form 3,4-dihydroxyphenylacetate, using FADH(-) provided by the reductase component HpaC to activate oxygen. To a lesser extent, can also use reduced FMN. In vitro, has hydroxylation activity toward tyrosol and various cinnamic acid derivatives, catalyzing the hydroxylation of p-coumaric acid, caffeic acid, ferulic acid, and coniferaldehyde. In Pseudomonas aeruginosa (strain ATCC 15692 / DSM 22644 / CIP 104116 / JCM 14847 / LMG 12228 / 1C / PRS 101 / PAO1), this protein is 4-hydroxyphenylacetate 3-monooxygenase oxygenase component.